A 325-amino-acid chain; its full sequence is ATP-dependent (S)-NAD(P)H-hydrate dehydratase (325 aa).

Residues 9–315 enclose the YjeF C-terminal domain; that stretch reads LLKKVYNMVP…EHVHTAFLNV (307 aa). (6S)-NADPHX is bound by residues Gly-119 and 172–178; that span reads NVVEFGR. ATP contacts are provided by residues 211 to 215 and 230 to 239; these read KGAKD and GGLKRSGGQG. Asp-240 provides a ligand contact to (6S)-NADPHX.

The protein belongs to the NnrD/CARKD family. Mg(2+) is required as a cofactor.

The protein resides in the cytoplasm. The catalysed reaction is (6S)-NADHX + ATP = ADP + phosphate + NADH + H(+). It carries out the reaction (6S)-NADPHX + ATP = ADP + phosphate + NADPH + H(+). Catalyzes the dehydration of the S-form of NAD(P)HX at the expense of ATP, which is converted to ADP. Together with NAD(P)HX epimerase, which catalyzes the epimerization of the S- and R-forms, the enzyme allows the repair of both epimers of NAD(P)HX, a damaged form of NAD(P)H that is a result of enzymatic or heat-dependent hydration. The sequence is that of ATP-dependent (S)-NAD(P)H-hydrate dehydratase from Phaeosphaeria nodorum (strain SN15 / ATCC MYA-4574 / FGSC 10173) (Glume blotch fungus).